The sequence spans 150 residues: Flagellar assembly factor FliW (150 aa).

It belongs to the FliW family. Interacts with translational regulator CsrA and flagellin(s).

It localises to the cytoplasm. In terms of biological role, acts as an anti-CsrA protein, binds CsrA and prevents it from repressing translation of its target genes, one of which is flagellin. Binds to flagellin and participates in the assembly of the flagellum. In Leptospira interrogans serogroup Icterohaemorrhagiae serovar copenhageni (strain Fiocruz L1-130), this protein is Flagellar assembly factor FliW.